Reading from the N-terminus, the 500-residue chain is Glucose-1-phosphate adenylyltransferase small subunit 1, chloroplastic/amyloplastic (500 aa).

A chloroplast-targeting transit peptide spans 1–50 (MAMMAMGAASWAPIPAPARAAAAFYPGRDLAAARRRRGAAARRPFVFTPR).

The protein belongs to the bacterial/plant glucose-1-phosphate adenylyltransferase family. In terms of assembly, heterotetramer composed of two small and two large subunits. In terms of tissue distribution, expressed in leaves.

It localises to the plastid. Its subcellular location is the chloroplast. The protein localises to the amyloplast. The enzyme catalyses alpha-D-glucose 1-phosphate + ATP + H(+) = ADP-alpha-D-glucose + diphosphate. The protein operates within glycan biosynthesis; starch biosynthesis. Its activity is regulated as follows. Activated by 3'phosphoglycerate, inhibited by orthophosphate. Allosteric regulation. Its function is as follows. Involved in synthesis of starch. Catalyzes the synthesis of ADP-glucose, a molecule that serves as an activated glycosyl donor for alpha-1,4-glucan synthesis. Essential for starch synthesis in leaf chloroplasts and endosperm amyloplasts. The sequence is that of Glucose-1-phosphate adenylyltransferase small subunit 1, chloroplastic/amyloplastic from Oryza sativa subsp. japonica (Rice).